The sequence spans 187 residues: dTTP/UTP pyrophosphatase (187 aa).

Catalysis depends on D65, which acts as the Proton acceptor.

Belongs to the Maf family. YhdE subfamily. Requires a divalent metal cation as cofactor.

The protein localises to the cytoplasm. The enzyme catalyses dTTP + H2O = dTMP + diphosphate + H(+). The catalysed reaction is UTP + H2O = UMP + diphosphate + H(+). Nucleoside triphosphate pyrophosphatase that hydrolyzes dTTP and UTP. May have a dual role in cell division arrest and in preventing the incorporation of modified nucleotides into cellular nucleic acids. The sequence is that of dTTP/UTP pyrophosphatase from Pyrococcus abyssi (strain GE5 / Orsay).